Here is a 225-residue protein sequence, read N- to C-terminus: Holliday junction branch migration complex subunit RuvA (225 aa).

The segment at 1–71 (MISWINGDLV…EDSDLLFGFT (71 aa)) is domain I. A domain II region spans residues 72-150 (SKDQKNFFIE…SEILSEEEKS (79 aa)). The tract at residues 151-161 (KDEFEIKDPEI) is flexible linker. Residues 161-225 (IIKMIEDLQL…LDEDSSNKDR (65 aa)) form a domain III region.

Belongs to the RuvA family. In terms of assembly, homotetramer. Forms an RuvA(8)-RuvB(12)-Holliday junction (HJ) complex. HJ DNA is sandwiched between 2 RuvA tetramers; dsDNA enters through RuvA and exits via RuvB. An RuvB hexamer assembles on each DNA strand where it exits the tetramer. Each RuvB hexamer is contacted by two RuvA subunits (via domain III) on 2 adjacent RuvB subunits; this complex drives branch migration. In the full resolvosome a probable DNA-RuvA(4)-RuvB(12)-RuvC(2) complex forms which resolves the HJ.

The protein localises to the cytoplasm. In terms of biological role, the RuvA-RuvB-RuvC complex processes Holliday junction (HJ) DNA during genetic recombination and DNA repair, while the RuvA-RuvB complex plays an important role in the rescue of blocked DNA replication forks via replication fork reversal (RFR). RuvA specifically binds to HJ cruciform DNA, conferring on it an open structure. The RuvB hexamer acts as an ATP-dependent pump, pulling dsDNA into and through the RuvAB complex. HJ branch migration allows RuvC to scan DNA until it finds its consensus sequence, where it cleaves and resolves the cruciform DNA. This is Holliday junction branch migration complex subunit RuvA from Prochlorococcus marinus (strain AS9601).